The chain runs to 1351 residues: Bromodomain-containing protein 4A (1351 aa).

7 disordered regions span residues 1 to 23 (MSSE…GIEG), 35 to 58 (PQPQ…QPKR), 168 to 244 (ETEL…RPPA), 285 to 368 (AAQP…DTKT), 478 to 638 (EPEE…PMSY), 700 to 799 (CLRK…LDSS), and 821 to 1334 (PDLP…PSID). In terms of domain architecture, Bromo 1 spans 58–164 (RQTNQLQYLL…KLFLQKISEM (107 aa)). The segment covering 208–219 (VKPPVTPVSKPS) has biased composition (low complexity). Over residues 220 to 235 (TPTPPTVTRAPTPPQT) the composition is skewed to pro residues. A compositionally biased stretch (basic and acidic residues) spans 327-343 (PRKENGRQIRPTKKTEV). The span at 349 to 359 (PAPPVLHPQPA) shows a compositional bias: pro residues. The Bromo 2 domain occupies 366-475 (TKTSEQLRYC…DVFEMRFAKM (110 aa)). The span at 482-504 (APAPVPSLAPGPPAPSIKGPPPT) shows a compositional bias: pro residues. The NPS region stretch occupies residues 504–522 (TSSDSSSDSTSDSESSSDS). The segment covering 505-517 (SSDSSSDSTSDSE) has biased composition (low complexity). The interval 543 to 598 (QLAALSQPQPNKPKKKEREKRKEKHKRKEEVEEPRKGRIREPPAKKPKKSVQGSGG) is BID region. A compositionally biased stretch (basic residues) spans 554-569 (KPKKKEREKRKEKHKR). A compositionally biased stretch (basic and acidic residues) spans 570 to 586 (KEEVEEPRKGRIREPPA). The span at 607-621 (PPPAPRPARPAPPSA) shows a compositional bias: pro residues. An NET domain is found at 624–708 (ESSEEETQRC…SCLRKKRKSQ (85 aa)). Residues 629-638 (ETQRCRPMSY) show a composition bias toward basic and acidic residues. The span at 725–738 (SSSESESSSESSTS) shows a compositional bias: low complexity. Positions 751–767 (QKKKGHSGRESRKHHHP) are enriched in basic residues. The segment covering 788 to 799 (PSYPLPSSLDSS) has biased composition (low complexity). Pro residues predominate over residues 872-890 (PAMPPSASPPPPAPQPPQQ). Positions 892–902 (HVHHHHHHHAQ) are enriched in basic residues. Over residues 927–953 (LQKSQQPPTQSPIHSLLTSVKVQSQTP) the composition is skewed to polar residues. Over residues 968–983 (VYPPPPSTATTAPPPA) the composition is skewed to pro residues. Composition is skewed to low complexity over residues 994-1003 (PVVPQQLPAG) and 1011-1028 (QQQQ…SHQQ). The segment at 1051 to 1350 (RQQKQETYPG…LMEIFEQNLF (300 aa)) is C-terminal (CTD) region. Residues 1075-1089 (PPVPPYPGLTHPPSP) show a composition bias toward pro residues. Basic and acidic residues-rich tracts occupy residues 1150-1161 (PRPDLKKMDGGR) and 1176-1197 (PEKE…DIKI). Over residues 1214 to 1224 (PTSAGKSTSDS) the composition is skewed to polar residues. Positions 1226 to 1284 (ELFRRQAREKEERERALKLQAEQAERVRREQDRMSRTREDDEVQDQARKAHEEARRRQE) are enriched in basic and acidic residues. Residues 1301–1310 (SPAQSSQPMM) are compositionally biased toward low complexity. Basic and acidic residues predominate over residues 1311–1323 (DQREMARKREQER).

The protein belongs to the BET family.

The protein localises to the nucleus. It is found in the chromosome. Functionally, chromatin reader protein that recognizes and binds acetylated histones and plays a key role in transmission of epigenetic memory across cell divisions and transcription regulation. Remains associated with acetylated chromatin throughout the entire cell cycle and provides epigenetic memory for postmitotic G1 gene transcription by preserving acetylated chromatin status and maintaining high-order chromatin structure. During interphase, plays a key role in regulating the transcription of signal-inducible genes by associating with the P-TEFb complex and recruiting it to promoters. The chain is Bromodomain-containing protein 4A (brd4-a) from Xenopus laevis (African clawed frog).